Here is a 939-residue protein sequence, read N- to C-terminus: Valine--tRNA ligase (939 aa).

Residues 47-57 (PNVTGILHMGH) carry the 'HIGH' region motif. Residues 563–567 (KLSKS) carry the 'KMSKS' region motif. Position 566 (Lys566) interacts with ATP. Residues 874–939 (EHLAKERVRL…QSILDKLASL (66 aa)) are a coiled coil.

This sequence belongs to the class-I aminoacyl-tRNA synthetase family. ValS type 1 subfamily. Monomer.

It is found in the cytoplasm. It carries out the reaction tRNA(Val) + L-valine + ATP = L-valyl-tRNA(Val) + AMP + diphosphate. Functionally, catalyzes the attachment of valine to tRNA(Val). As ValRS can inadvertently accommodate and process structurally similar amino acids such as threonine, to avoid such errors, it has a 'posttransfer' editing activity that hydrolyzes mischarged Thr-tRNA(Val) in a tRNA-dependent manner. The protein is Valine--tRNA ligase of Chlamydia trachomatis serovar L2 (strain ATCC VR-902B / DSM 19102 / 434/Bu).